The sequence spans 747 residues: Pseudouridine-metabolizing bifunctional protein C1861.05 (747 aa).

The tract at residues 1–379 is pseudouridine-5'-phosphate glycosidase; that stretch reads MLIVMNRGCR…KVSDKGVSSS (379 aa). Glu-61 (proton donor; for PsiMP glycosidase activity) is an active-site residue. 2 residues coordinate substrate: Lys-123 and Val-143. A Mn(2+)-binding site is contributed by Asp-175. 177–179 is a substrate binding site; it reads SAD. The Nucleophile; for PsiMP glycosidase activity role is filled by Lys-196. Residues 380–747 are pseudouridine kinase; it reads KKKITETTSK…VNPEIKTLLK (368 aa).

The protein in the N-terminal section; belongs to the pseudouridine-5'-phosphate glycosidase family. It in the C-terminal section; belongs to the carbohydrate kinase PfkB family. Requires Mn(2+) as cofactor.

It localises to the cytoplasm. The enzyme catalyses D-ribose 5-phosphate + uracil = psi-UMP + H2O. The catalysed reaction is pseudouridine + ATP = psi-UMP + ADP + H(+). Bifunctional enzyme that catalyzes the phosphorylation of pseudouridine to pseudouridine 5'-phosphate (PsiMP), and the reversible cleavage of pseudouridine 5'-phosphate to ribose 5-phosphate and uracil. Is involved in a pseudouridine degradation pathway. The protein is Pseudouridine-metabolizing bifunctional protein C1861.05 of Schizosaccharomyces pombe (strain 972 / ATCC 24843) (Fission yeast).